Consider the following 298-residue polypeptide: 3-deoxy-manno-octulosonate cytidylyltransferase (298 aa).

A helical transmembrane segment spans residues 22–42; the sequence is VWVLHGLALGAAAAAAAVAYL.

Belongs to the KdsB family. Mg(2+) is required as a cofactor. As to expression, ubiquitous.

The protein localises to the membrane. It catalyses the reaction 3-deoxy-alpha-D-manno-oct-2-ulosonate + CTP = CMP-3-deoxy-beta-D-manno-octulosonate + diphosphate. The protein operates within nucleotide-sugar biosynthesis; CMP-3-deoxy-D-manno-octulosonate biosynthesis; CMP-3-deoxy-D-manno-octulosonate from 3-deoxy-D-manno-octulosonate and CTP: step 1/1. In terms of biological role, catalyzes the production of the sugar nucleotide CMP-3-deoxy-D-manno-octulosonate (CMP-KDO). CTP is the preferred nucleotide donor, and it can partially be replaced with UTP but not with ATP. Activates KDO during the biosynthesis of rhamnogalacturonan II (RG-II), a structurally complex pectic polysaccharide of the primary cell wall. RG-II is essential for the cell wall integrity of rapidly growing tissues and pollen tube growth and elongation. In Zea mays (Maize), this protein is 3-deoxy-manno-octulosonate cytidylyltransferase.